The primary structure comprises 412 residues: Serine hydroxymethyltransferase (412 aa).

(6S)-5,6,7,8-tetrahydrofolate-binding positions include leucine 120 and 124–126 (GHL). An N6-(pyridoxal phosphate)lysine modification is found at lysine 229. 352-354 (SPF) serves as a coordination point for (6S)-5,6,7,8-tetrahydrofolate.

Belongs to the SHMT family. Homodimer. Pyridoxal 5'-phosphate serves as cofactor.

The protein localises to the cytoplasm. The catalysed reaction is (6R)-5,10-methylene-5,6,7,8-tetrahydrofolate + glycine + H2O = (6S)-5,6,7,8-tetrahydrofolate + L-serine. The protein operates within one-carbon metabolism; tetrahydrofolate interconversion. It participates in amino-acid biosynthesis; glycine biosynthesis; glycine from L-serine: step 1/1. In terms of biological role, catalyzes the reversible interconversion of serine and glycine with tetrahydrofolate (THF) serving as the one-carbon carrier. This reaction serves as the major source of one-carbon groups required for the biosynthesis of purines, thymidylate, methionine, and other important biomolecules. Also exhibits THF-independent aldolase activity toward beta-hydroxyamino acids, producing glycine and aldehydes, via a retro-aldol mechanism. This is Serine hydroxymethyltransferase from Acetivibrio thermocellus (strain ATCC 27405 / DSM 1237 / JCM 9322 / NBRC 103400 / NCIMB 10682 / NRRL B-4536 / VPI 7372) (Clostridium thermocellum).